Reading from the N-terminus, the 540-residue chain is Hexose transporter HXT14 (540 aa).

The Cytoplasmic segment spans residues 1-56 (MTAQIPYQHSSGYISHFHNNELDAGRGRDYNVTIKYLDDKEENIEGQAAKISHNAS). Residues 57–76 (LHIPVLLCLVISLGGFIFGW) form a helical membrane-spanning segment. At 77–119 (DIGTIGGMTNMVSFQEKFGTTNIIHDDETIFVSTKKLTDLQIG) the chain is on the extracellular side. A helical transmembrane segment spans residues 120–140 (LIISIFNISCGVGALTLSKIG). Topologically, residues 141-146 (DWIGRK) are cytoplasmic. The helical transmembrane segment at 147 to 167 (GGIWFALVVYCIGITIQILSY) threads the bilayer. Topologically, residues 168–177 (GRWYFLTLGR) are extracellular. Residues 178-198 (AVTGIGVGVTTVLVPMFLSEN) form a helical membrane-spanning segment. At 199–204 (SPLKIR) the chain is on the cytoplasmic side. Residues 205–225 (GSMVSTYQLIVTFGILMGNIL) traverse the membrane as a helical segment. The Extracellular segment spans residues 226–243 (NFICERCYKDPTQNIAWQ). Residues 244–264 (LPLFLGYIWAIIIGMSLVYVP) form a helical membrane-spanning segment. Residues 265 to 357 (ESPQYLAKIK…IMAFQQLSGI (93 aa)) are Cytoplasmic-facing. Residues 358–374 (NYFFYYGTSVFKGVGIK) traverse the membrane as a helical segment. The Extracellular portion of the chain corresponds to 375 to 380 (DPYITS). Residues 381–398 (IILSSVNFLSTILGIYYV) form a helical membrane-spanning segment. The Cytoplasmic portion of the chain corresponds to 399 to 405 (EKWGHKT). The chain crosses the membrane as a helical span at residues 406–426 (CLLYGSTNLLFYMMTYATVGT). Residues 427-440 (FGRETDFSNIVLII) are Extracellular-facing. Residues 441 to 461 (VTCCFIFWFAITLGPVTFVLV) form a helical membrane-spanning segment. The Cytoplasmic portion of the chain corresponds to 462-478 (SELFPLRTRAISMAICT). A helical transmembrane segment spans residues 479–499 (FINWMFNFLISLLTPMIVSKI). A topological domain (extracellular) is located at residue Asp500. The helical transmembrane segment at 501-521 (FKLGYIFAACLLALIIFSWIL) threads the bilayer. The Cytoplasmic segment spans residues 522 to 540 (VPETRKKNEQEINKIFEPE).

This sequence belongs to the major facilitator superfamily. Sugar transporter (TC 2.A.1.1) family.

The protein localises to the membrane. Its function is as follows. Probable glucose transporter. The chain is Hexose transporter HXT14 (HXT14) from Saccharomyces cerevisiae (strain ATCC 204508 / S288c) (Baker's yeast).